The following is a 159-amino-acid chain: 6,7-dimethyl-8-ribityllumazine synthase (159 aa).

Residues W30, 64–66, and 88–90 contribute to the 5-amino-6-(D-ribitylamino)uracil site; these read TFE and CVI. 93 to 94 is a binding site for (2S)-2-hydroxy-3-oxobutyl phosphate; the sequence is ET. Residue H96 is the Proton donor of the active site. Position 121 (F121) interacts with 5-amino-6-(D-ribitylamino)uracil. R135 contributes to the (2S)-2-hydroxy-3-oxobutyl phosphate binding site.

Belongs to the DMRL synthase family.

The enzyme catalyses (2S)-2-hydroxy-3-oxobutyl phosphate + 5-amino-6-(D-ribitylamino)uracil = 6,7-dimethyl-8-(1-D-ribityl)lumazine + phosphate + 2 H2O + H(+). The protein operates within cofactor biosynthesis; riboflavin biosynthesis; riboflavin from 2-hydroxy-3-oxobutyl phosphate and 5-amino-6-(D-ribitylamino)uracil: step 1/2. Functionally, catalyzes the formation of 6,7-dimethyl-8-ribityllumazine by condensation of 5-amino-6-(D-ribitylamino)uracil with 3,4-dihydroxy-2-butanone 4-phosphate. This is the penultimate step in the biosynthesis of riboflavin. This chain is 6,7-dimethyl-8-ribityllumazine synthase, found in Cytophaga hutchinsonii (strain ATCC 33406 / DSM 1761 / CIP 103989 / NBRC 15051 / NCIMB 9469 / D465).